The chain runs to 144 residues: Small ribosomal subunit protein eS19B (144 aa).

Belongs to the eukaryotic ribosomal protein eS19 family. In terms of assembly, component of the small ribosomal subunit (SSU). Mature yeast ribosomes consist of a small (40S) and a large (60S) subunit. The 40S small subunit contains 1 molecule of ribosomal RNA (18S rRNA) and 33 different proteins (encoded by 57 genes). The large 60S subunit contains 3 rRNA molecules (25S, 5.8S and 5S rRNA) and 46 different proteins (encoded by 81 genes).

It is found in the cytoplasm. In terms of biological role, component of the ribosome, a large ribonucleoprotein complex responsible for the synthesis of proteins in the cell. The small ribosomal subunit (SSU) binds messenger RNAs (mRNAs) and translates the encoded message by selecting cognate aminoacyl-transfer RNA (tRNA) molecules. The large subunit (LSU) contains the ribosomal catalytic site termed the peptidyl transferase center (PTC), which catalyzes the formation of peptide bonds, thereby polymerizing the amino acids delivered by tRNAs into a polypeptide chain. The nascent polypeptides leave the ribosome through a tunnel in the LSU and interact with protein factors that function in enzymatic processing, targeting, and the membrane insertion of nascent chains at the exit of the ribosomal tunnel. eS19 is required for proper maturation of the small (40S) ribosomal subunit. Binds to 40S pre-ribosomal particles, probably required after association of NOC4 but before association of ENP1, TSR1 and RIO2 with 20/21S pre-rRNA. Required for proper maturation of the small (40S) ribosomal subunit. Binds to 40s pre-ribosomal particles, probably required after association of NOC4 but before association of ENP1, TSR1 and RIO2 with 20/21S pre-rRNA. The protein is Small ribosomal subunit protein eS19B of Saccharomyces cerevisiae (strain ATCC 204508 / S288c) (Baker's yeast).